The primary structure comprises 471 residues: Collagenase 3 (471 aa).

A signal peptide spans 1–19; it reads MHPGVLAAFLFLSWTHCRA. Residues 20–103 constitute a propeptide, activation peptide; the sequence is LPLPSGGDED…PRCGVPDVGE (84 aa). The short motif at 94-101 is the Cysteine switch element; sequence PRCGVPDV. Zn(2+) is bound at residue C96. An N-linked (GlcNAc...) asparagine glycan is attached at N117. D128 serves as a coordination point for Ca(2+). An N-linked (GlcNAc...) asparagine glycan is attached at N152. Position 162 (D162) interacts with Ca(2+). H172 and D174 together coordinate Zn(2+). The tract at residues 176 to 246 is interaction with TIMP2; that stretch reads YPFDGPSGLL…GALMFPIYTY (71 aa). Ca(2+) is bound by residues D179, G180, S182, and L184. Zn(2+) is bound at residue H187. Ca(2+) contacts are provided by N194, G196, and D198. H200 is a binding site for Zn(2+). Ca(2+) contacts are provided by D202, D203, and E205. Zn(2+) is bound at residue H222. E223 is a catalytic residue. Residues H226, H232, and M240 each coordinate Zn(2+). The interval 263 to 284 is disordered; sequence QSLYGPGDEDPNPKHPKTPDKC. The tract at residues 268 to 471 is interaction with collagen; the sequence is PGDEDPNPKH…VMPANSILWC (204 aa). Over residues 273-284 the composition is skewed to basic and acidic residues; the sequence is PNPKHPKTPDKC. Hemopexin repeat units lie at residues 281–330, 331–377, 379–427, and 428–471; these read PDKC…WPEL, PNRI…GLPK, VKKI…FPGI, and GDKV…ILWC. Cysteines 284 and 471 form a disulfide. Ca(2+)-binding residues include D291, I293, D335, and A337. Phosphotyrosine; by PKDCC is present on Y366. Residues S383, A385, D432, and V434 each coordinate Ca(2+).

Belongs to the peptidase M10A family. As to quaternary structure, monomer. Interacts with TIMP1, TIMP2 and TIMP3. Binds (via the C-terminal region) to collagen. Ca(2+) is required as a cofactor. It depends on Zn(2+) as a cofactor. In terms of processing, the proenzyme is activated by removal of the propeptide; this cleavage can be effected by other matrix metalloproteinases, such as MMP2, MMP3 and MMP14 and may involve several cleavage steps. Cleavage can also be autocatalytic, after partial maturation by another protease or after treatment with 4-aminophenylmercuric acetate (APMA) (in vitro). N-glycosylated. Post-translationally, tyrosine phosphorylated by PKDCC/VLK. As to expression, detected in fetal cartilage and calvaria, in chondrocytes of hypertrophic cartilage in vertebrae and in the dorsal end of ribs undergoing ossification, as well as in osteoblasts and periosteal cells below the inner periosteal region of ossified ribs. Detected in chondrocytes from in joint cartilage that have been treated with TNF and IL1B, but not in untreated chondrocytes. Detected in T lymphocytes. Detected in breast carcinoma tissue.

The protein resides in the secreted. It is found in the extracellular space. It localises to the extracellular matrix. Inhibited by TIMP1, TIMP2 and TIMP3. Inhibited by acetohydroxamic acid and other zinc chelators. Plays a role in the degradation of extracellular matrix proteins including fibrillar collagen, fibronectin, TNC and ACAN. Cleaves triple helical collagens, including type I, type II and type III collagen, but has the highest activity with soluble type II collagen. Can also degrade collagen type IV, type XIV and type X. May also function by activating or degrading key regulatory proteins, such as TGFB1 and CCN2. Plays a role in wound healing, tissue remodeling, cartilage degradation, bone development, bone mineralization and ossification. Required for normal embryonic bone development and ossification. Plays a role in the healing of bone fractures via endochondral ossification. Plays a role in wound healing, probably by a mechanism that involves proteolytic activation of TGFB1 and degradation of CCN2. Plays a role in keratinocyte migration during wound healing. May play a role in cell migration and in tumor cell invasion. The chain is Collagenase 3 (MMP13) from Homo sapiens (Human).